We begin with the raw amino-acid sequence, 357 residues long: 3-isopropylmalate dehydrogenase (357 aa).

Substrate is bound by residues Arg97, Arg107, Arg135, and Asp224. The Mg(2+) site is built by Asp224, Asp248, and Asp252. Residue 282-294 (GSAPDIAGKNIAN) coordinates NAD(+).

Belongs to the isocitrate and isopropylmalate dehydrogenases family. LeuB type 1 subfamily. As to quaternary structure, homodimer. Mg(2+) is required as a cofactor. It depends on Mn(2+) as a cofactor.

It is found in the cytoplasm. The catalysed reaction is (2R,3S)-3-isopropylmalate + NAD(+) = 4-methyl-2-oxopentanoate + CO2 + NADH. Its pathway is amino-acid biosynthesis; L-leucine biosynthesis; L-leucine from 3-methyl-2-oxobutanoate: step 3/4. Catalyzes the oxidation of 3-carboxy-2-hydroxy-4-methylpentanoate (3-isopropylmalate) to 3-carboxy-4-methyl-2-oxopentanoate. The product decarboxylates to 4-methyl-2 oxopentanoate. This Prochlorococcus marinus subsp. pastoris (strain CCMP1986 / NIES-2087 / MED4) protein is 3-isopropylmalate dehydrogenase.